Reading from the N-terminus, the 240-residue chain is T4 protein (240 aa).

The protein belongs to the poxviruses B9 family.

The polypeptide is T4 protein (Sheeppox virus (strain KS-1) (SPPV)).